We begin with the raw amino-acid sequence, 212 residues long: tRNA (guanine-N(7)-)-methyltransferase (212 aa).

S-adenosyl-L-methionine contacts are provided by Glu44, Asp69, Asp96, and Asp118. The active site involves Asp118. Position 122 (Lys122) interacts with substrate. Residues 124-129 (RHEKRR) are interaction with RNA. Substrate is bound by residues Asp154 and 191–194 (TEYE).

It belongs to the class I-like SAM-binding methyltransferase superfamily. TrmB family.

The catalysed reaction is guanosine(46) in tRNA + S-adenosyl-L-methionine = N(7)-methylguanosine(46) in tRNA + S-adenosyl-L-homocysteine. Its pathway is tRNA modification; N(7)-methylguanine-tRNA biosynthesis. Its function is as follows. Catalyzes the formation of N(7)-methylguanine at position 46 (m7G46) in tRNA. This Streptococcus suis (strain 05ZYH33) protein is tRNA (guanine-N(7)-)-methyltransferase.